Here is a 414-residue protein sequence, read N- to C-terminus: Gamma-glutamyl phosphate reductase (414 aa).

The protein belongs to the gamma-glutamyl phosphate reductase family.

The protein localises to the cytoplasm. The catalysed reaction is L-glutamate 5-semialdehyde + phosphate + NADP(+) = L-glutamyl 5-phosphate + NADPH + H(+). Its pathway is amino-acid biosynthesis; L-proline biosynthesis; L-glutamate 5-semialdehyde from L-glutamate: step 2/2. Catalyzes the NADPH-dependent reduction of L-glutamate 5-phosphate into L-glutamate 5-semialdehyde and phosphate. The product spontaneously undergoes cyclization to form 1-pyrroline-5-carboxylate. The chain is Gamma-glutamyl phosphate reductase from Limosilactobacillus reuteri (strain DSM 20016) (Lactobacillus reuteri).